The sequence spans 278 residues: NAD kinase (278 aa).

Asp-67 acts as the Proton acceptor in catalysis. NAD(+)-binding positions include 67 to 68 (DG), Arg-72, 137 to 138 (NE), Lys-148, Arg-165, Asp-167, 178 to 183 (TGYAMS), Ala-202, and Gln-237.

This sequence belongs to the NAD kinase family. It depends on a divalent metal cation as a cofactor.

The protein resides in the cytoplasm. It carries out the reaction NAD(+) + ATP = ADP + NADP(+) + H(+). Involved in the regulation of the intracellular balance of NAD and NADP, and is a key enzyme in the biosynthesis of NADP. Catalyzes specifically the phosphorylation on 2'-hydroxyl of the adenosine moiety of NAD to yield NADP. This chain is NAD kinase, found in Thermococcus kodakarensis (strain ATCC BAA-918 / JCM 12380 / KOD1) (Pyrococcus kodakaraensis (strain KOD1)).